Here is a 191-residue protein sequence, read N- to C-terminus: UPF0228 protein MM_1428 (191 aa).

The protein belongs to the UPF0228 family.

The chain is UPF0228 protein MM_1428 from Methanosarcina mazei (strain ATCC BAA-159 / DSM 3647 / Goe1 / Go1 / JCM 11833 / OCM 88) (Methanosarcina frisia).